Reading from the N-terminus, the 296-residue chain is Cytidine deaminase (296 aa).

2 consecutive CMP/dCMP-type deaminase domains span residues threonine 47–lysine 167 and aspartate 186–valine 296. Position 88–90 (asparagine 88–glutamate 90) interacts with substrate. Histidine 101 is a Zn(2+) binding site. Glutamate 103 (proton donor) is an active-site residue. 2 residues coordinate Zn(2+): cysteine 128 and cysteine 131.

The protein belongs to the cytidine and deoxycytidylate deaminase family. In terms of assembly, homodimer. The cofactor is Zn(2+).

The catalysed reaction is cytidine + H2O + H(+) = uridine + NH4(+). It catalyses the reaction 2'-deoxycytidine + H2O + H(+) = 2'-deoxyuridine + NH4(+). Its function is as follows. This enzyme scavenges exogenous and endogenous cytidine and 2'-deoxycytidine for UMP synthesis. The sequence is that of Cytidine deaminase from Shewanella sp. (strain ANA-3).